Here is a 282-residue protein sequence, read N- to C-terminus: Complement component 1 Q subcomponent-binding protein, mitochondrial (282 aa).

Residues 1–73 (MLPLLRCVPR…PCACGCGCGS (73 aa)) constitute a mitochondrion transit peptide. The interval 76–93 (TDGDKAFVDFLSDEIKEE) is C1q binding. S87 bears the Phosphoserine mark. K91 is subject to N6-acetyllysine. The disordered stretch occupies residues 138-164 (SIPPTFDGEEEPSQGQKVEEQEPELTS). An interaction with MAVS region spans residues 168 to 213 (FVVEVIKNDDGKKALVLDCHYPEDEVGQEDEAESDIFSIREVSFQS). A Phosphotyrosine modification is found at Y188. Residues S201 and S205 each carry the phosphoserine modification. T214 carries the post-translational modification Phosphothreonine.

This sequence belongs to the MAM33 family. As to quaternary structure, homotrimer; three monomers form a donut-shaped structure with an unusually asymmetric charge distribution on the surface. Interacts with CDK13, HRK, VTN, NFYB, ADRA1B, FOXC1, DDX21, DDX50, NCL, SRSF1, SRSF9 and CDKN2A isoform smARF. Interacts with CD93; the association may represent a cell surface C1q receptor. Interacts with KRT1; the association represents a cell surface kininogen receptor. Interacts with CD209; the interaction is indicative for a C1q:C1QBP:CD209 signaling complex. Interacts with FBL and RRP1; the respective interactions with C1QBP are competitive. Probably associates with the mitoribosome. Interacts with MAVS; the interaction occurs upon viral transfection. Interacts with PPIF. Interacts with U2AF1L4. Interacts with PLEKHN1. Interacts with VGF-derived peptide TLQP-21. Interacts with POLGARF which is produced from an alternative reading frame of the POLG gene; the interaction results in nucleolar localization of C1QBP, probably due to prevention of C1QBP maturation and redirection from mitochondria to nucleoli. Interacts with MRE11 and RAD50; forming the MRC (MRE11-RAD50-C1QBP) complex that inhibits the activity of MRE11. (Microbial infection) Interacts with Rubella virus capsid protein; the interaction occurs in mitochondria. Interacts with Rubella virus protease/methyltransferase p150. In terms of assembly, (Microbial infection) Interacts with Staphylococcus aureus protein A/spa. As to quaternary structure, (Microbial infection) Interacts with Staphylococcus aureus protein A/spa, HIV-1 Tat and HCV core protein. (Microbial infection) Interacts with HIV-1 Tat and HCV core protein. In terms of assembly, (Microbial infection) Interacts with L.monocytogenes internalin B. As to quaternary structure, (Microbial infection) Interacts with Epstein-Barr virus EBNA1. Expressed on cell surface of peripheral blood cells (at protein level); Surface expression is reported for macrophages and monocyte-derived dendritic cells.

It localises to the mitochondrion matrix. The protein resides in the nucleus. It is found in the nucleolus. Its subcellular location is the cell membrane. The protein localises to the secreted. It localises to the cytoplasm. Its function is as follows. Multifunctional and multicompartmental protein involved in inflammation and infection processes, ribosome biogenesis, protein synthesis in mitochondria, regulation of apoptosis, transcriptional regulation and pre-mRNA splicing. At the cell surface is thought to act as an endothelial receptor for plasma proteins of the complement and kallikrein-kinin cascades. Putative receptor for C1q; specifically binds to the globular 'heads' of C1q thus inhibiting C1; may perform the receptor function through a complex with C1qR/CD93. In complex with cytokeratin-1/KRT1 is a high affinity receptor for kininogen-1/HMWK. Can also bind other plasma proteins, such as coagulation factor XII leading to its autoactivation. May function to bind initially fluid kininogen-1 to the cell membrane. The secreted form may enhance both extrinsic and intrinsic coagulation pathways. It is postulated that the cell surface form requires docking with transmembrane proteins for downstream signaling which might be specific for a cell-type or response. By acting as C1q receptor is involved in chemotaxis of immature dendritic cells and neutrophils and is proposed to signal through CD209/DC-SIGN on immature dendritic cells, through integrin alpha-4/beta-1 during trophoblast invasion of the decidua, and through integrin beta-1 during endothelial cell adhesion and spreading. Signaling involved in inhibition of innate immune response is implicating the PI3K-AKT/PKB pathway. Required for protein synthesis in mitochondria. In mitochondrial translation may be involved in formation of functional 55S mitoribosomes; the function seems to involve its RNA-binding activity. Acts as a RNA modification reader, which specifically recognizes and binds mitochondrial RNAs modified by C5-methylcytosine (m5C) in response to stress, and promotes recruitment of the mitochondrial degradosome complex, leading to their degradation. May be involved in the nucleolar ribosome maturation process; the function may involve the exchange of FBL for RRP1 in the association with pre-ribosome particles. Involved in regulation of RNA splicing by inhibiting the RNA-binding capacity of SRSF1 and its phosphorylation. Is required for the nuclear translocation of splicing factor U2AF1L4. Involved in regulation of CDKN2A- and HRK-mediated apoptosis. Stabilizes mitochondrial CDKN2A isoform smARF. May be involved in regulation of FOXC1 transcriptional activity and NFY/CCAAT-binding factor complex-mediated transcription. May play a role in antibacterial defense as it can bind to cell surface hyaluronan and inhibit Streptococcus pneumoniae hyaluronate lyase. May be involved in modulation of the immune response; ligation by HCV core protein is resulting in suppression of interleukin-12 production in monocyte-derived dendritic cells. Involved in regulation of antiviral response by inhibiting RIGI- and IFIH1-mediated signaling pathways probably involving its association with MAVS after viral infection. Acts as a regulator of DNA repair via homologous recombination by inhibiting the activity of MRE11: interacts with unphosphorylated MRE11 and RAD50 in absence of DNA damage, preventing formation and activity of the MRN complex. Following DNA damage, dissociates from phosphorylated MRE11, allowing formation of the MRN complex. In terms of biological role, (Microbial infection) Involved in HIV-1 replication, presumably by contributing to splicing of viral RNA. Functionally, (Microbial infection) In infection processes acts as an attachment site for microbial proteins, including Listeria monocytogenes internalin B (InlB) and Staphylococcus aureus protein A. (Microbial infection) Involved in replication of Rubella virus. The polypeptide is Complement component 1 Q subcomponent-binding protein, mitochondrial (C1QBP) (Homo sapiens (Human)).